A 346-amino-acid chain; its full sequence is Phosphate acyltransferase (346 aa).

This sequence belongs to the PlsX family. In terms of assembly, homodimer. Probably interacts with PlsY.

The protein localises to the cytoplasm. It catalyses the reaction a fatty acyl-[ACP] + phosphate = an acyl phosphate + holo-[ACP]. It participates in lipid metabolism; phospholipid metabolism. Functionally, catalyzes the reversible formation of acyl-phosphate (acyl-PO(4)) from acyl-[acyl-carrier-protein] (acyl-ACP). This enzyme utilizes acyl-ACP as fatty acyl donor, but not acyl-CoA. This chain is Phosphate acyltransferase, found in Delftia acidovorans (strain DSM 14801 / SPH-1).